The following is a 737-amino-acid chain: Elongation factor 2 (737 aa).

Positions 18–262 (TRVRNIGIIA…TVIKFVPNPR (245 aa)) constitute a tr-type G domain. GTP contacts are provided by residues 27-34 (AHVDHGKT), 93-97 (DTPGH), and 147-150 (NKVD). Residue histidine 604 is modified to Diphthamide.

Belongs to the TRAFAC class translation factor GTPase superfamily. Classic translation factor GTPase family. EF-G/EF-2 subfamily.

Its subcellular location is the cytoplasm. Catalyzes the GTP-dependent ribosomal translocation step during translation elongation. During this step, the ribosome changes from the pre-translocational (PRE) to the post-translocational (POST) state as the newly formed A-site-bound peptidyl-tRNA and P-site-bound deacylated tRNA move to the P and E sites, respectively. Catalyzes the coordinated movement of the two tRNA molecules, the mRNA and conformational changes in the ribosome. In Sulfurisphaera tokodaii (strain DSM 16993 / JCM 10545 / NBRC 100140 / 7) (Sulfolobus tokodaii), this protein is Elongation factor 2 (fusA).